The chain runs to 129 residues: UPF0325 protein ESA_03178 (129 aa).

Belongs to the UPF0325 family.

This chain is UPF0325 protein ESA_03178, found in Cronobacter sakazakii (strain ATCC BAA-894) (Enterobacter sakazakii).